Here is a 193-residue protein sequence, read N- to C-terminus: Small ribosomal subunit protein uS7 (193 aa).

This sequence belongs to the universal ribosomal protein uS7 family. Part of the 30S ribosomal subunit.

Its function is as follows. One of the primary rRNA binding proteins, it binds directly to 16S rRNA where it nucleates assembly of the head domain of the 30S subunit. Is located at the subunit interface close to the decoding center. This chain is Small ribosomal subunit protein uS7, found in Saccharolobus solfataricus (strain ATCC 35092 / DSM 1617 / JCM 11322 / P2) (Sulfolobus solfataricus).